Here is a 387-residue protein sequence, read N- to C-terminus: (S)-8-oxocitronellyl enol synthase (387 aa).

NADP(+) contacts are provided by residues T36–I38, R64–R65, D82–I83, S106–W107, and Q140. Residues K144 and Y177 contribute to the active site. Substrate is bound by residues K144 and Y177. NADP(+)-binding positions include Y177 and S211–M213.

Belongs to the short-chain dehydrogenases/reductases (SDR) family. Highly divergent. In terms of tissue distribution, expressed in leaves.

It catalyses the reaction (S)-8-oxocitronellyl enol + NADP(+) = (6E)-8-oxogeranial + NADPH + H(+). The catalysed reaction is (S)-8-oxocitronellyl enol + NAD(+) = (6E)-8-oxogeranial + NADH + H(+). It carries out the reaction (R)-8-oxocitronellyl enol + NADP(+) = (6E)-8-oxogeranial + NADPH + H(+). Its function is as follows. Iridoid synthase that catalyzes the first step in generation of the iridoid ring scaffold using the linear monoterpene (6E)-8-oxogeranial as substrate. Reduces 8-oxogeranial, generating an unstable product that is subsequently cyclized into several possible products, either non-enzymically or by dedicated cyclases. Iridoids comprise a large family of distinctive bicyclic monoterpenes that possess a wide range of pharmacological activities, including anticancer, anti-inflammatory, antifungal and antibacterial activities. This chain is (S)-8-oxocitronellyl enol synthase, found in Antirrhinum majus (Garden snapdragon).